The sequence spans 341 residues: Holliday junction branch migration complex subunit RuvB (341 aa).

A disordered region spans residues 1 to 21 (MSQPDPMLRPEPLESDGEDRA). The tract at residues 4-183 (PDPMLRPEPL…FGIPTRLQFY (180 aa)) is large ATPase domain (RuvB-L). ATP contacts are provided by residues L22, R23, G64, K67, T68, T69, 130–132 (EDF), R173, Y183, and R220. T68 is a Mg(2+) binding site. Positions 184 to 254 (TIEELDLIVT…IADSALTRLG (71 aa)) are small ATPAse domain (RuvB-S). Residues 257–341 (HLGLDTADRR…PRTQESLFDE (85 aa)) are head domain (RuvB-H). DNA-binding residues include R293, R312, and R317.

Belongs to the RuvB family. Homohexamer. Forms an RuvA(8)-RuvB(12)-Holliday junction (HJ) complex. HJ DNA is sandwiched between 2 RuvA tetramers; dsDNA enters through RuvA and exits via RuvB. An RuvB hexamer assembles on each DNA strand where it exits the tetramer. Each RuvB hexamer is contacted by two RuvA subunits (via domain III) on 2 adjacent RuvB subunits; this complex drives branch migration. In the full resolvosome a probable DNA-RuvA(4)-RuvB(12)-RuvC(2) complex forms which resolves the HJ.

It is found in the cytoplasm. It carries out the reaction ATP + H2O = ADP + phosphate + H(+). In terms of biological role, the RuvA-RuvB-RuvC complex processes Holliday junction (HJ) DNA during genetic recombination and DNA repair, while the RuvA-RuvB complex plays an important role in the rescue of blocked DNA replication forks via replication fork reversal (RFR). RuvA specifically binds to HJ cruciform DNA, conferring on it an open structure. The RuvB hexamer acts as an ATP-dependent pump, pulling dsDNA into and through the RuvAB complex. RuvB forms 2 homohexamers on either side of HJ DNA bound by 1 or 2 RuvA tetramers; 4 subunits per hexamer contact DNA at a time. Coordinated motions by a converter formed by DNA-disengaged RuvB subunits stimulates ATP hydrolysis and nucleotide exchange. Immobilization of the converter enables RuvB to convert the ATP-contained energy into a lever motion, pulling 2 nucleotides of DNA out of the RuvA tetramer per ATP hydrolyzed, thus driving DNA branch migration. The RuvB motors rotate together with the DNA substrate, which together with the progressing nucleotide cycle form the mechanistic basis for DNA recombination by continuous HJ branch migration. Branch migration allows RuvC to scan DNA until it finds its consensus sequence, where it cleaves and resolves cruciform DNA. This is Holliday junction branch migration complex subunit RuvB from Paracoccus denitrificans (strain Pd 1222).